Consider the following 66-residue polypeptide: MGLSNAASLASMQTLDKAMASATAMTTAAQAQKVQTDAISSITDGQMDSASKAMNSGQKAAKAIQF.

Residues Q46–Q58 show a composition bias toward polar residues. The tract at residues Q46–F66 is disordered.

Belongs to the HrpA type 2 family.

The protein resides in the secreted. It localises to the fimbrium. Its function is as follows. Major structure protein of the hrp pilus, which is a component of the type III secretion system (T3SS, Hrp secretion system) required for effector protein delivery, parasitism, and pathogenicity. The hrp pilus functions as a conduit for protein delivery into the host cell. The polypeptide is Hrp pili protein HrpA (hrpA) (Dickeya chrysanthemi (Pectobacterium chrysanthemi)).